A 264-amino-acid chain; its full sequence is Thymidylate synthase 2 (264 aa).

Arginine 21 is a dUMP binding site. (6R)-5,10-methylene-5,6,7,8-tetrahydrofolate is bound at residue histidine 51. 126–127 contributes to the dUMP binding site; the sequence is RR. Cysteine 146 serves as the catalytic Nucleophile. DUMP is bound by residues 166-169, asparagine 177, and 207-209; these read RSAD and HIY. Aspartate 169 lines the (6R)-5,10-methylene-5,6,7,8-tetrahydrofolate pocket. Serine 263 is a (6R)-5,10-methylene-5,6,7,8-tetrahydrofolate binding site.

The protein belongs to the thymidylate synthase family. Bacterial-type ThyA subfamily. In terms of assembly, homodimer.

The protein resides in the cytoplasm. The enzyme catalyses dUMP + (6R)-5,10-methylene-5,6,7,8-tetrahydrofolate = 7,8-dihydrofolate + dTMP. It functions in the pathway pyrimidine metabolism; dTTP biosynthesis. Catalyzes the reductive methylation of 2'-deoxyuridine-5'-monophosphate (dUMP) to 2'-deoxythymidine-5'-monophosphate (dTMP) while utilizing 5,10-methylenetetrahydrofolate (mTHF) as the methyl donor and reductant in the reaction, yielding dihydrofolate (DHF) as a by-product. This enzymatic reaction provides an intracellular de novo source of dTMP, an essential precursor for DNA biosynthesis. The protein is Thymidylate synthase 2 of Bacillus spizizenii (strain ATCC 23059 / NRRL B-14472 / W23) (Bacillus subtilis subsp. spizizenii).